We begin with the raw amino-acid sequence, 208 residues long: Adenylyl-sulfate kinase (208 aa).

An ATP-binding site is contributed by 31–38 (GLSGSGKS). The active-site Phosphoserine intermediate is the Ser105.

Belongs to the APS kinase family.

It catalyses the reaction adenosine 5'-phosphosulfate + ATP = 3'-phosphoadenylyl sulfate + ADP + H(+). Its pathway is sulfur metabolism; hydrogen sulfide biosynthesis; sulfite from sulfate: step 2/3. In terms of biological role, catalyzes the synthesis of activated sulfate. This chain is Adenylyl-sulfate kinase, found in Pseudomonas entomophila (strain L48).